The primary structure comprises 989 residues: MRGPLEPDSADRPSLAILMREAPVLGDAETAEIKLSQATESLSPAERAALDGLLSRAPIARAVCLGMAEGSPFLLDLVRAEPTRLLRVLSDDPHAHLARLMADCAATAASGSEAEVMRALRRMRSEAALLIALADMGGAFDLIAVTAALTDVADAALRAALAFLLGDAARAGRLKPQDAADPAVGCGLAVIAMGKHGARELNYSSDIDLVVVFDREKAPLAEEVSAAPFFVKITQGLVRLLQERTADGYVLRVDLRLRPDPGSTAVALSTAAALDYYEREGATWERAAYIKARPVAGDLAVGRTFLAELSPFVWRRGLDFQAIADVHAMKREIHAFRGHDVVAVEGHNVKLGRGGIREVEFFVQTQQLIAGGRDPLLRNSRTLEALDALTAHRWIEPSVRDALAEAYVFLRRVEHRIQMVADAQTHSLPESRPAMEGFARFMGYPDRDAFAAALVTRLQTVQTHYANLFEDVAPPAVLDADLMFPPDENDRKTLAALSRLGFRDPAAASGMVRRWLSGGPRALKGESARAHLARIVPLMLEALARGGDPDGALAAADRFLSDLPGPQLLTALDRHPDLVRLLATILTAAPRLGETLARRPSLTDALLDPAFFDVLPDEAGLTAHLEHLLDTADTDEEQLDRARRFRQEQHVLIGVRIASGTLEAARAGEAYATLAEVIIRALHRRVWARFREAHGTIAGAQTAVLAMGKLGGREMTAGSDLDLIVLYDFDADADPTSDGARPLTGAQYFARFTQRLVTALTSLTNAGKLYDVDLRLRPSGRSGPVATRLASFATYQREEAWTWEHMALTRARVIAAEPEFGAKVRDVICAVMGQPRDPRRLAGDILDMRQSIAAEKGEGDMWNLKHAAGGQVDVEFLAQYLVLAHACAHPEIVDTATARVLATAARLGLLEPEDAHVLQRACRLYQNLTQVLRLAVDAHIVPADASPALRALLARAGEMPDFTTLDADLADTQAKVRTIFERILETAAE.

The segment at 1 to 473 (MRGPLEPDSA…HYANLFEDVA (473 aa)) is adenylyl removase. Residues 479 to 989 (DADLMFPPDE…FERILETAAE (511 aa)) form an adenylyl transferase region.

The protein belongs to the GlnE family. Requires Mg(2+) as cofactor.

The enzyme catalyses [glutamine synthetase]-O(4)-(5'-adenylyl)-L-tyrosine + phosphate = [glutamine synthetase]-L-tyrosine + ADP. The catalysed reaction is [glutamine synthetase]-L-tyrosine + ATP = [glutamine synthetase]-O(4)-(5'-adenylyl)-L-tyrosine + diphosphate. Functionally, involved in the regulation of glutamine synthetase GlnA, a key enzyme in the process to assimilate ammonia. When cellular nitrogen levels are high, the C-terminal adenylyl transferase (AT) inactivates GlnA by covalent transfer of an adenylyl group from ATP to specific tyrosine residue of GlnA, thus reducing its activity. Conversely, when nitrogen levels are low, the N-terminal adenylyl removase (AR) activates GlnA by removing the adenylyl group by phosphorolysis, increasing its activity. The regulatory region of GlnE binds the signal transduction protein PII (GlnB) which indicates the nitrogen status of the cell. The protein is Bifunctional glutamine synthetase adenylyltransferase/adenylyl-removing enzyme of Xanthobacter autotrophicus (strain ATCC BAA-1158 / Py2).